A 38-amino-acid chain; its full sequence is U-theraphotoxin-Aju1a (38 aa).

3 disulfides stabilise this stretch: C3–C24, C7–C30, and C16–C35.

As to expression, expressed by the venom gland.

The protein localises to the secreted. Functionally, has strong antifungal activity against C.albicans MDM8, C.krusei IOC 4559 (MIC=2.5-5 uM), C.glabrata IOC 45658 (MIC=2.5-5 uM), C.albicans IOC 45588 (MIC=2.5-5 uM), C.parapsilosis IOC 456416 (MIC=2.5-5 uM), C.tropicalis IOC 45608 (MIC=2.5-5 uM), C.guilliermondii IOC 455716 (MIC=2.5-5 uM) and A.niger (MIC=5-10 uM). Lacks antifungal activity against B.bassiana. Has no antibacterial effect against Gram-positive bacteria M.luteus, S.epidermidis, S.aureus or against Gram-negative bacteria E.coli and P.aeruginosa. Has no hemolytic activity against human erythrocytes. Probable ion channel inhibitor. The polypeptide is U-theraphotoxin-Aju1a (Avicularia juruensis (Yellow-banded pinktoe)).